The following is a 340-amino-acid chain: Protein-arginine kinase (340 aa).

Residues V21–A242 form the Phosphagen kinase C-terminal domain. Residues S24–R28, H79, R113, R164–M168, and R195–E200 each bind ATP.

It belongs to the ATP:guanido phosphotransferase family.

The catalysed reaction is L-arginyl-[protein] + ATP = N(omega)-phospho-L-arginyl-[protein] + ADP + H(+). In terms of biological role, catalyzes the specific phosphorylation of arginine residues in proteins. The chain is Protein-arginine kinase from Listeria monocytogenes serovar 1/2a (strain ATCC BAA-679 / EGD-e).